The sequence spans 122 residues: Flagellar protein FliT (122 aa).

Positions M1–K50 are required for homodimerization. Positions I60–R98 are fliD binding.

This sequence belongs to the FliT family. As to quaternary structure, homodimer. Interacts with FliD and FlhC.

It localises to the cytoplasm. The protein resides in the cytosol. Functionally, dual-function protein that regulates the transcription of class 2 flagellar operons and that also acts as an export chaperone for the filament-capping protein FliD. As a transcriptional regulator, acts as an anti-FlhDC factor; it directly binds FlhC, thus inhibiting the binding of the FlhC/FlhD complex to class 2 promoters, resulting in decreased expression of class 2 flagellar operons. As a chaperone, effects FliD transition to the membrane by preventing its premature polymerization, and by directing it to the export apparatus. This Salmonella gallinarum (strain 287/91 / NCTC 13346) protein is Flagellar protein FliT.